Consider the following 430-residue polypeptide: Serine--tRNA ligase (430 aa).

L-serine is bound at residue 237–239 (TAE). 268 to 270 (RSE) provides a ligand contact to ATP. An L-serine-binding site is contributed by glutamate 291. ATP is bound at residue 355 to 358 (EISS). Position 391 (serine 391) interacts with L-serine.

Belongs to the class-II aminoacyl-tRNA synthetase family. Type-1 seryl-tRNA synthetase subfamily. As to quaternary structure, homodimer. The tRNA molecule binds across the dimer.

It is found in the cytoplasm. It catalyses the reaction tRNA(Ser) + L-serine + ATP = L-seryl-tRNA(Ser) + AMP + diphosphate + H(+). It carries out the reaction tRNA(Sec) + L-serine + ATP = L-seryl-tRNA(Sec) + AMP + diphosphate + H(+). It functions in the pathway aminoacyl-tRNA biosynthesis; selenocysteinyl-tRNA(Sec) biosynthesis; L-seryl-tRNA(Sec) from L-serine and tRNA(Sec): step 1/1. Its function is as follows. Catalyzes the attachment of serine to tRNA(Ser). Is also able to aminoacylate tRNA(Sec) with serine, to form the misacylated tRNA L-seryl-tRNA(Sec), which will be further converted into selenocysteinyl-tRNA(Sec). This is Serine--tRNA ligase from Klebsiella pneumoniae subsp. pneumoniae (strain ATCC 700721 / MGH 78578).